A 1444-amino-acid chain; its full sequence is Cleavage and polyadenylation specificity factor subunit 1 (1444 aa).

Disordered stretches follow at residues 406 to 439 (PPAS…SKSV), 549 to 571 (EETL…DDGR), 716 to 778 (GGVR…PAPF), and 902 to 924 (FREK…EGTG). Over residues 413–422 (EAADKEEPPS) the composition is skewed to basic and acidic residues. Phosphoserine is present on residues S757 and S767. Residues 759–776 (SKEEARRSSQPPADRDPA) show a composition bias toward basic and acidic residues. The Nuclear localization signal motif lies at 894–909 (KKVPHNINFREKKPKP).

It belongs to the CPSF1 family. Component of the cleavage and polyadenylation specificity factor (CPSF) complex, composed of CPSF1, CPSF2, CPSF3, CPSF4 and FIP1L1. Found in a complex with CPSF1, FIP1L1 and PAPOLA. Interacts with FIP1L1, TENT2/GLD2 and SRRM1. Interacts with TUT1; the interaction is direct and mediates the recruitment of the CPSF complex on the 3'UTR of selected pre-mRNAs. Post-translationally, the N-terminus is blocked.

It localises to the nucleus. It is found in the nucleoplasm. Its function is as follows. Component of the cleavage and polyadenylation specificity factor (CPSF) complex that plays a key role in pre-mRNA 3'-end formation, recognizing the AAUAAA signal sequence and interacting with poly(A) polymerase and other factors to bring about cleavage and poly(A) addition. This subunit is involved in the RNA recognition step of the polyadenylation reaction. May play a role in eye morphogenesis and the development of retinal ganglion cell projections to the midbrain. The protein is Cleavage and polyadenylation specificity factor subunit 1 (CPSF1) of Bos taurus (Bovine).